A 556-amino-acid chain; its full sequence is MNSLEQVKGLIKEEIQAAVLKAELATEEQIPNVVLESPKDKTNGDFSTNMAMQLARVAKKAPRMIAEELVANFDKAKASIEKIEIAGPGFINFYMDNSYLTDLIPTIVNAGEAYGETNTGKGEKVQVEFVSANPTGDLHLGHARGAAVGDTLCNLLAKAGYDVSREYYINDAGNQIHNLALSVEARYMQALGLEKEMPEDGYHGADIIGIGKRLAEEFGDRYAKADEKESYEFYREYGLKYELAKLQKDLESFRVKFDVWFSETSLYKNGKIDQALAVLKERDEIFEEDGATWFRSMTYGDDKNRVLIKNDGSYTYLTPDIAYHRDKLERGFDKLINIWGADHHGYIPRMKAAIQALGYDKETLEVEIIQMVQLYQNGEKMKMSKRTGKAVTLRELMEEVGVDAMRYFFAMRSGDSHLDFDMDLAVSKSNENPVYYAQYAHARVCSILRQGEELGLATGGDVNYKLVTSEKEVELLKKLGEFPAVVADAAQKRLPHRITNYAFELAATLHSFYNAEKVLNQDNLELSKARYELMKAVRTTLQNALAIVGVSAPEKM.

The short motif at 132–142 (ANPTGDLHLGH) is the 'HIGH' region element.

This sequence belongs to the class-I aminoacyl-tRNA synthetase family. As to quaternary structure, monomer.

The protein resides in the cytoplasm. The enzyme catalyses tRNA(Arg) + L-arginine + ATP = L-arginyl-tRNA(Arg) + AMP + diphosphate. This chain is Arginine--tRNA ligase, found in Bacillus cereus (strain ATCC 14579 / DSM 31 / CCUG 7414 / JCM 2152 / NBRC 15305 / NCIMB 9373 / NCTC 2599 / NRRL B-3711).